A 235-amino-acid chain; its full sequence is Voltage-gated hydrogen channel 1 (235 aa).

Residues 1 to 65 (MSRYLKHFTA…SLRKLYSTER (65 aa)) lie on the Cytoplasmic side of the membrane. Residues 66–86 (FQIVVVCLVVLDAIFVLCELL) form a helical membrane-spanning segment. The Extracellular segment spans residues 87 to 103 (IDLSIIEADHHRIAPQV). The helical transmembrane segment at 104–126 (FHYLSLALLTFFMVELAGKIFAY) threads the bilayer. Topologically, residues 127–134 (RLEFLHHK) are cytoplasmic. The chain crosses the membrane as a helical span at residues 135–155 (FEVFDGIVVVVSFILDIIYIS). Residues 156–162 (KEDAFDA) lie on the Extracellular side of the membrane. A helical transmembrane segment spans residues 163–183 (MGLLILLRLWRVARIINGILV). Residues 184-235 (SVQNRANHRVEKLKEINESLVHQVNELKEQNTKMDQENVRLRALLKDHSIDF) are Cytoplasmic-facing. The stretch at 187–231 (NRANHRVEKLKEINESLVHQVNELKEQNTKMDQENVRLRALLKDH) forms a coiled coil.

This sequence belongs to the hydrogen channel family. Homodimer.

The protein resides in the membrane. Its subcellular location is the cell membrane. Mediates the voltage-dependent proton permeability of excitable membranes. Forms a proton-selective channel through which protons may pass in accordance with their electrochemical gradient. The polypeptide is Voltage-gated hydrogen channel 1 (hvcn1) (Danio rerio (Zebrafish)).